The primary structure comprises 70 residues: MPKRKSATKGDEPARRSARLSARPVPKPAAKPKKAAAPKKAVKGKKAAENGDAKAEAKVQAAGDGAGNAK.

The disordered stretch occupies residues 1–70 (MPKRKSATKG…AAGDGAGNAK (70 aa)). Positions 30 to 45 (AKPKKAAAPKKAVKGK) are enriched in basic residues. Over residues 46-57 (KAAENGDAKAEA) the composition is skewed to basic and acidic residues.

Belongs to the HMGN family.

It localises to the nucleus. The protein localises to the secreted. Its function is as follows. Non-histone protein that probably binds to the inner side of nucleosomal DNA, altering the association between the DNA and the nucleosome octamer. In terms of biological role, oncorhyncin III has antibacterial activity against Gram-positive and Gram-negative bacteria at submicromolar concentrations. The polypeptide is Non-histone chromosomal protein H6 (Oncorhynchus mykiss (Rainbow trout)).